Consider the following 557-residue polypeptide: MSDNQRSRAITQGAERTPNRAMLRAVGFSDNDFDKPIVGVANGFSTITPCNKGLNELALAAEQALKQAAAMPQMFGTITVSDGISMGTEGMKYSLVSREVIADSIETAVQAESMDGVIAIGGCDKNMPGAMIAIARMNVPAIFVYGGTIKPGHYKGKDLTIVSAFEAVGQYTSHKIDAKELLEVERHACPGAGSCGGMFTANTMSSAFEAMGMSLPYSSTMAAEDGEKLTSAARSAEVLVDAIRKQIRPRDIITRKSIENAIAVIMAVGGSTNAVLHFLAIAHAAEVTLTIDDFERMRGKVPVLCDLKPSGRYVATDLHKAGGIPQVMKMLLDHGLLHGDCITISGQTIAEILKDVPSEPREDQDVIRQWDNPLYVQGHLAILKGNLAPEGCVAKITGVKSPKITGPARVFDSEEACMAAILAREIQPGDVVVIRYEGPKGGPGMREMLSPTSALIGEGLGDSVGLITDGRFSGGTYGMVVGHVAPEAFVGGTIALVREGDSITIDAEQRLLQLNIPGDELARRRAEWQPPHPRYTRGVLAKYSKLVSSASRGAITD.

Cysteine 50 provides a ligand contact to [2Fe-2S] cluster. A Mg(2+)-binding site is contributed by aspartate 82. A [2Fe-2S] cluster-binding site is contributed by cysteine 123. The Mg(2+) site is built by aspartate 124 and lysine 125. Lysine 125 bears the N6-carboxylysine mark. Cysteine 195 contacts [2Fe-2S] cluster. Residue glutamate 447 coordinates Mg(2+). Catalysis depends on serine 473, which acts as the Proton acceptor.

Belongs to the IlvD/Edd family. As to quaternary structure, homodimer. [2Fe-2S] cluster serves as cofactor. The cofactor is Mg(2+).

The catalysed reaction is (2R)-2,3-dihydroxy-3-methylbutanoate = 3-methyl-2-oxobutanoate + H2O. It catalyses the reaction (2R,3R)-2,3-dihydroxy-3-methylpentanoate = (S)-3-methyl-2-oxopentanoate + H2O. It participates in amino-acid biosynthesis; L-isoleucine biosynthesis; L-isoleucine from 2-oxobutanoate: step 3/4. It functions in the pathway amino-acid biosynthesis; L-valine biosynthesis; L-valine from pyruvate: step 3/4. Functions in the biosynthesis of branched-chain amino acids. Catalyzes the dehydration of (2R,3R)-2,3-dihydroxy-3-methylpentanoate (2,3-dihydroxy-3-methylvalerate) into 2-oxo-3-methylpentanoate (2-oxo-3-methylvalerate) and of (2R)-2,3-dihydroxy-3-methylbutanoate (2,3-dihydroxyisovalerate) into 2-oxo-3-methylbutanoate (2-oxoisovalerate), the penultimate precursor to L-isoleucine and L-valine, respectively. The protein is Dihydroxy-acid dehydratase of Nitrosospira multiformis (strain ATCC 25196 / NCIMB 11849 / C 71).